Reading from the N-terminus, the 180-residue chain is UPF0340 protein llmg_0465 (180 aa).

It belongs to the UPF0340 family.

The protein is UPF0340 protein llmg_0465 of Lactococcus lactis subsp. cremoris (strain MG1363).